We begin with the raw amino-acid sequence, 388 residues long: Mitochondrial distribution and morphology protein 12 (388 aa).

Residues 1–388 form the SMP-LTD domain; the sequence is MSLDINWSLL…VFPNFHTVAL (388 aa). 2 disordered regions span residues 75-101 and 209-249; these read DDEGDFAEEEKQREKEREERDKLRNEA and PMSI…KVSS. The segment covering 83-101 has biased composition (basic and acidic residues); the sequence is EEKQREKEREERDKLRNEA. Positions 234 to 243 are enriched in pro residues; that stretch reads PSPPAHPAGL.

It belongs to the MDM12 family. Component of the ER-mitochondria encounter structure (ERMES) or MDM complex, composed of MMM1, MDM10, MDM12 and MDM34. An MMM1 homodimer associates with one molecule of MDM12 on each side in a pairwise head-to-tail manner, and the SMP-LTD domains of MMM1 and MDM12 generate a continuous hydrophobic tunnel for phospholipid trafficking.

The protein localises to the mitochondrion outer membrane. The protein resides in the endoplasmic reticulum membrane. Functionally, component of the ERMES/MDM complex, which serves as a molecular tether to connect the endoplasmic reticulum (ER) and mitochondria. Components of this complex are involved in the control of mitochondrial shape and protein biogenesis, and function in nonvesicular lipid trafficking between the ER and mitochondria. MDM12 is required for the interaction of the ER-resident membrane protein MMM1 and the outer mitochondrial membrane-resident beta-barrel protein MDM10. The MDM12-MMM1 subcomplex functions in the major beta-barrel assembly pathway that is responsible for biogenesis of all mitochondrial outer membrane beta-barrel proteins, and acts in a late step after the SAM complex. The MDM10-MDM12-MMM1 subcomplex further acts in the TOM40-specific pathway after the action of the MDM12-MMM1 complex. Essential for establishing and maintaining the structure of mitochondria and maintenance of mtDNA nucleoids. The chain is Mitochondrial distribution and morphology protein 12 from Cryptococcus neoformans var. neoformans serotype D (strain JEC21 / ATCC MYA-565) (Filobasidiella neoformans).